The following is a 467-amino-acid chain: DEAD-box ATP-dependent RNA helicase CshA (467 aa).

A Q motif motif is present at residues 2–30 (TTFQELGLSQEVMKAIERMGFEETTPIQA). Positions 33 to 203 (IPLSLQNKDV…ERFMNEPELV (171 aa)) constitute a Helicase ATP-binding domain. 46-53 (AQTGTGKT) is an ATP binding site. Positions 151-154 (DEAD) match the DEAD box motif. The 161-residue stretch at 214-374 (NIQQYYLEVH…RMKPPTLDEA (161 aa)) folds into the Helicase C-terminal domain. The interval 428–467 (TTPVQLTEEPPLAVKREKKRGGRPDGSARSRTKKRRITAH) is disordered. The segment covering 457 to 467 (SRTKKRRITAH) has biased composition (basic residues).

This sequence belongs to the DEAD box helicase family. CshA subfamily. As to quaternary structure, oligomerizes, may be a member of the RNA degradosome.

Its subcellular location is the cytoplasm. The catalysed reaction is ATP + H2O = ADP + phosphate + H(+). Its function is as follows. DEAD-box RNA helicase possibly involved in RNA degradation. Unwinds dsRNA in both 5'- and 3'-directions, has RNA-dependent ATPase activity. The chain is DEAD-box ATP-dependent RNA helicase CshA from Geobacillus kaustophilus (strain HTA426).